The following is a 419-amino-acid chain: NF-kappa-B essential modulator (419 aa).

Residues methionine 1–proline 48 form a disordered region. Residues methionine 1–valine 197 are required for interaction with and ubiquitination by MARCHF2. 2 positions are modified to phosphoserine; by IKKB: serine 31 and serine 43. The tract at residues glutamate 44–lysine 111 is interaction with CHUK/IKBKB. The stretch at glutamate 49 to isoleucine 353 forms a coiled coil. Serine 68 carries the post-translational modification Phosphoserine. Residues lysine 111, lysine 139, lysine 143, lysine 226, lysine 246, and lysine 264 each participate in a glycyl lysine isopeptide (Lys-Gly) (interchain with G-Cter in ubiquitin) cross-link. An interaction with TANK region spans residues leucine 150–glycine 257. The ubiquitin-binding (UBAN) stretch occupies residues aspartate 242–serine 350. The interval lysine 246–glutamine 365 is self-association. Residues serine 251 to glutamate 419 form a required for interaction with TNFAIP3 region. Lysine 277 participates in a covalent cross-link: Glycyl lysine isopeptide (Lys-Gly) (interchain with G-Cter in SUMO); alternate. A Glycyl lysine isopeptide (Lys-Gly) (interchain with G-Cter in ubiquitin); alternate cross-link involves residue lysine 277. Residues lysine 283, lysine 285, lysine 292, and lysine 302 each participate in a glycyl lysine isopeptide (Lys-Gly) (interchain with G-Cter in ubiquitin) cross-link. Residue lysine 309 forms a Glycyl lysine isopeptide (Lys-Gly) (interchain with G-Cter in SUMO); alternate linkage. A Glycyl lysine isopeptide (Lys-Gly) (interchain with G-Cter in ubiquitin); alternate cross-link involves residue lysine 309. Residues lysine 321, lysine 325, and lysine 326 each participate in a glycyl lysine isopeptide (Lys-Gly) (interchain with G-Cter in ubiquitin) cross-link. Positions leucine 322–leucine 343 are leucine-zipper. Residues methionine 356–lysine 394 form a disordered region. Serine 376 is subject to Phosphoserine; by IKKB. The interaction with CYLD stretch occupies residues serine 382–glutamate 419. Serine 387 carries the phosphoserine modification. Residues proline 389–glutamate 419 form a CCHC NOA-type zinc finger. Cysteine 397 contacts Zn(2+). A Glycyl lysine isopeptide (Lys-Gly) (interchain with G-Cter in ubiquitin) cross-link involves residue lysine 399. 3 residues coordinate Zn(2+): cysteine 400, histidine 413, and cysteine 417.

As to quaternary structure, homodimer; disulfide-linked. Component of the I-kappa-B-kinase (IKK) core complex consisting of CHUK, IKBKB and IKBKG; probably four alpha/CHUK-beta/IKBKB dimers are associated with four gamma/IKBKG subunits. The IKK core complex seems to associate with regulatory or adapter proteins to form a IKK-signalosome holo-complex. The IKK complex associates with TERF2IP/RAP1, leading to promote IKK-mediated phosphorylation of RELA/p65. Part of a complex composed of NCOA2, NCOA3, CHUK/IKKA, IKBKB, IKBKG and CREBBP. Interacts with COPS3, CYLD, NALP2, TRPC4AP and PIDD1. Interacts with ATM; the complex is exported from the nucleus. Interacts with TRAF6. Interacts with IKBKE. Interacts with TANK; the interaction is enhanced by IKBKE and TBK1. Part of a ternary complex consisting of TANK, IKBKB and IKBKG. Interacts with ZFAND5. Interacts with RIPK2. Interacts with TNIP1 and TNFAIP3; TNIP1 facilitates the TNFAIP3-mediated de-ubiquitination of IKBKG. Interacts with TNFAIP3; the interaction is induced by TNF stimulation and by polyubiquitin. Binds (via UBAN region) polyubiquitin; binds both 'Lys-63'-linked and linear polyubiquitin, with higher affinity for linear ubiquitin. Interacts with NLRP10. Interacts with TANK; this interaction increases in response to DNA damage. Interacts with USP10; this interaction increases in response to DNA damage. Interacts with ZC3H12A; this interaction increases in response to DNA damage. Interacts with IFIT5; the interaction synergizes the recruitment of IKK to MAP3K7 and enhances IKK phosphorylation. Interacts with TRIM29; this interaction induces IKBKG/NEMO ubiquitination and proteolytic degradation. Interacts with TRIM13; this interaction leads to IKBKG/NEMO ubiquitination. Interacts with ARFIP2. Interacts with RIPK1. Interacts with (ubiquitinated) BCL10; interaction with polyubiquitinated BCL10 via both 'Lys-63'-linked and linear ubiquitin is required for TCR-induced NF-kappa-B activation. Interacts with MARCHF2; during the late stages of macrophage viral and bacterial infection; the interaction leads to ubiquitination and degradation of IKBKG/NEMO. In terms of processing, phosphorylation at Ser-68 attenuates aminoterminal homodimerization. Post-translationally, polyubiquitinated on Lys-285 through 'Lys-63'; the ubiquitination is mediated downstream of NOD2 and RIPK2 and probably plays a role in signaling by facilitating interactions with ubiquitin domain-containing proteins and activates the NF-kappa-B pathway. Polyubiquitinated on Lys-399 through 'Lys-63'; the ubiquitination is mediated by BCL10, MALT1 and TRAF6 and probably plays a role in signaling by facilitating interactions with ubiquitin domain-containing proteins and activates the NF-kappa-B pathway. Monoubiquitinated on Lys-277 and Lys-309; promotes nuclear export. Polyubiquitinated through 'Lys-27' by TRIM23; involved in antiviral innate and inflammatory responses. Linear polyubiquitinated on Lys-111, Lys-143, Lys-226, Lys-246, Lys-264, Lys-277, Lys-285, Lys-292, Lys-302, Lys-309 and Lys-326; the head-to-tail polyubiquitination is mediated by the LUBAC complex and plays a key role in NF-kappa-B activation. Deubiquitinated by USP10 in a TANK-dependent and -independent manner, leading to the negative regulation of NF-kappa-B signaling upon DNA damage. Ubiquitinated at Lys-326 by MARCHF2 following bacterial and viral infection which leads to its degradation. Polyubiquitinated via 'Lys-29'-linked ubiquitin; leading to lysosomal degradation. Sumoylated on Lys-277 and Lys-309 with SUMO1. In terms of processing, neddylated by TRIM40, resulting in stabilization of NFKBIA and down-regulation of NF-kappa-B activity.

The protein resides in the cytoplasm. It localises to the nucleus. Its function is as follows. Regulatory subunit of the IKK core complex which phosphorylates inhibitors of NF-kappa-B thus leading to the dissociation of the inhibitor/NF-kappa-B complex and ultimately the degradation of the inhibitor. Its binding to scaffolding polyubiquitin plays a key role in IKK activation by multiple signaling receptor pathways. Can recognize and bind both 'Lys-63'-linked and linear polyubiquitin upon cell stimulation, with a much highr affinity for linear polyubiquitin. Could be implicated in NF-kappa-B-mediated protection from cytokine toxicity. Essential for viral activation of IRF3. Involved in TLR3- and IFIH1-mediated antiviral innate response; this function requires 'Lys-27'-linked polyubiquitination. This is NF-kappa-B essential modulator (IKBKG) from Bos taurus (Bovine).